Here is a 195-residue protein sequence, read N- to C-terminus: Probable serine/threonine-protein kinase BUD32 homolog (195 aa).

A Protein kinase domain is found at 1-195 (MKVYLGGEAE…GRYVERVSMG (195 aa)). Residue K12 coordinates ATP. Residue D107 is the Proton acceptor of the active site.

Belongs to the protein kinase superfamily. Tyr protein kinase family. BUD32 subfamily.

It is found in the cytoplasm. The enzyme catalyses L-seryl-[protein] + ATP = O-phospho-L-seryl-[protein] + ADP + H(+). It carries out the reaction L-threonyl-[protein] + ATP = O-phospho-L-threonyl-[protein] + ADP + H(+). Could be involved in the formation of a threonylcarbamoyl group on adenosine at position 37 (t(6)A37) in tRNAs that read codons beginning with adenine. This chain is Probable serine/threonine-protein kinase BUD32 homolog, found in Archaeoglobus fulgidus (strain ATCC 49558 / DSM 4304 / JCM 9628 / NBRC 100126 / VC-16).